Here is a 155-residue protein sequence, read N- to C-terminus: 2-C-methyl-D-erythritol 2,4-cyclodiphosphate synthase (155 aa).

Residues aspartate 8 and histidine 10 each coordinate a divalent metal cation. 4-CDP-2-C-methyl-D-erythritol 2-phosphate is bound by residues 8–10 (DVH) and 34–35 (HS). Histidine 42 contributes to the a divalent metal cation binding site. Residues 56–58 (DIG), 61–65 (FPDSD), 100–106 (AQKPKML), 132–135 (TTEE), phenylalanine 139, and lysine 142 contribute to the 4-CDP-2-C-methyl-D-erythritol 2-phosphate site.

Belongs to the IspF family. As to quaternary structure, homotrimer. It depends on a divalent metal cation as a cofactor.

It carries out the reaction 4-CDP-2-C-methyl-D-erythritol 2-phosphate = 2-C-methyl-D-erythritol 2,4-cyclic diphosphate + CMP. The protein operates within isoprenoid biosynthesis; isopentenyl diphosphate biosynthesis via DXP pathway; isopentenyl diphosphate from 1-deoxy-D-xylulose 5-phosphate: step 4/6. In terms of biological role, involved in the biosynthesis of isopentenyl diphosphate (IPP) and dimethylallyl diphosphate (DMAPP), two major building blocks of isoprenoid compounds. Catalyzes the conversion of 4-diphosphocytidyl-2-C-methyl-D-erythritol 2-phosphate (CDP-ME2P) to 2-C-methyl-D-erythritol 2,4-cyclodiphosphate (ME-CPP) with a corresponding release of cytidine 5-monophosphate (CMP). The protein is 2-C-methyl-D-erythritol 2,4-cyclodiphosphate synthase of Clostridium botulinum (strain Kyoto / Type A2).